The sequence spans 134 residues: DNA-directed RNA polymerase subunit omega (134 aa).

The protein belongs to the RNA polymerase subunit omega family. As to quaternary structure, the RNAP catalytic core consists of 2 alpha, 1 beta, 1 beta' and 1 omega subunit. When a sigma factor is associated with the core the holoenzyme is formed, which can initiate transcription.

It carries out the reaction RNA(n) + a ribonucleoside 5'-triphosphate = RNA(n+1) + diphosphate. Promotes RNA polymerase assembly. Latches the N- and C-terminal regions of the beta' subunit thereby facilitating its interaction with the beta and alpha subunits. This chain is DNA-directed RNA polymerase subunit omega, found in Rhizobium johnstonii (strain DSM 114642 / LMG 32736 / 3841) (Rhizobium leguminosarum bv. viciae).